Consider the following 66-residue polypeptide: UPF0370 protein YpfN (66 aa).

Residues Leu-4–Ile-24 traverse the membrane as a helical segment. A disordered region spans residues Lys-39 to Lys-66. Residues Leu-42–Lys-51 are compositionally biased toward basic and acidic residues.

This sequence belongs to the UPF0370 family.

Its subcellular location is the cell membrane. This Salmonella paratyphi A (strain AKU_12601) protein is UPF0370 protein YpfN.